Consider the following 299-residue polypeptide: Probable lipid kinase YegS (299 aa).

In terms of domain architecture, DAGKc spans 2 to 133 (AEFPASLLIL…IDMAQVNKQT (132 aa)). ATP-binding positions include T40, 66 to 72 (GDGTINE), and T95. 3 residues coordinate Mg(2+): L215, D218, and L220. The active-site Proton acceptor is the E271.

This sequence belongs to the diacylglycerol/lipid kinase family. YegS lipid kinase subfamily. Mg(2+) serves as cofactor. Ca(2+) is required as a cofactor.

The protein resides in the cytoplasm. Functionally, probably phosphorylates lipids; the in vivo substrate is unknown. This Escherichia coli O6:K15:H31 (strain 536 / UPEC) protein is Probable lipid kinase YegS.